We begin with the raw amino-acid sequence, 187 residues long: DNA-directed RNA polymerase subunit Rpo7 (187 aa).

Positions 82-166 (YELIEGEVVD…RGSKIALTMR (85 aa)) constitute an S1 motif domain.

The protein belongs to the eukaryotic RPB7/RPC8 RNA polymerase subunit family. In terms of assembly, part of the RNA polymerase complex. Forms a stalk with Rpo4 that extends from the main structure.

The protein localises to the cytoplasm. It carries out the reaction RNA(n) + a ribonucleoside 5'-triphosphate = RNA(n+1) + diphosphate. Functionally, DNA-dependent RNA polymerase (RNAP) catalyzes the transcription of DNA into RNA using the four ribonucleoside triphosphates as substrates. The chain is DNA-directed RNA polymerase subunit Rpo7 from Methanocaldococcus jannaschii (strain ATCC 43067 / DSM 2661 / JAL-1 / JCM 10045 / NBRC 100440) (Methanococcus jannaschii).